Reading from the N-terminus, the 161-residue chain is Globin CTT-VIIB-4 (161 aa).

Positions 1–16 (MKFFAVLALCIVGAIA) are cleaved as a signal peptide. The 144-residue stretch at 18 to 161 (PLTADEASLV…NTMAVAVAHL (144 aa)) folds into the Globin domain. Positions 76 and 111 each coordinate heme b.

Belongs to the globin family. In terms of assembly, homodimer.

The sequence is that of Globin CTT-VIIB-4 (CTT-7B4) from Chironomus thummi thummi (Midge).